Consider the following 181-residue polypeptide: ATP synthase subunit delta (181 aa).

The protein belongs to the ATPase delta chain family. F-type ATPases have 2 components, F(1) - the catalytic core - and F(0) - the membrane proton channel. F(1) has five subunits: alpha(3), beta(3), gamma(1), delta(1), epsilon(1). F(0) has three main subunits: a(1), b(2) and c(10-14). The alpha and beta chains form an alternating ring which encloses part of the gamma chain. F(1) is attached to F(0) by a central stalk formed by the gamma and epsilon chains, while a peripheral stalk is formed by the delta and b chains.

The protein localises to the cell membrane. In terms of biological role, f(1)F(0) ATP synthase produces ATP from ADP in the presence of a proton or sodium gradient. F-type ATPases consist of two structural domains, F(1) containing the extramembraneous catalytic core and F(0) containing the membrane proton channel, linked together by a central stalk and a peripheral stalk. During catalysis, ATP synthesis in the catalytic domain of F(1) is coupled via a rotary mechanism of the central stalk subunits to proton translocation. This protein is part of the stalk that links CF(0) to CF(1). It either transmits conformational changes from CF(0) to CF(1) or is implicated in proton conduction. The polypeptide is ATP synthase subunit delta (Oceanobacillus iheyensis (strain DSM 14371 / CIP 107618 / JCM 11309 / KCTC 3954 / HTE831)).